A 293-amino-acid polypeptide reads, in one-letter code: Protease HtpX (293 aa).

The next 2 membrane-spanning stretches (helical) occupy residues 4 to 24 and 38 to 58; these read IGLF…VLSL and LTNL…ISLF. Zn(2+) is bound at residue His-145. The active site involves Glu-146. His-149 is a binding site for Zn(2+). Transmembrane regions (helical) follow at residues 156–176 and 193–213; these read ITLS…ARII and IAFF…ASMI. Glu-222 provides a ligand contact to Zn(2+).

It belongs to the peptidase M48B family. Zn(2+) serves as cofactor.

The protein localises to the cell inner membrane. The protein is Protease HtpX of Cellvibrio japonicus (strain Ueda107) (Pseudomonas fluorescens subsp. cellulosa).